The primary structure comprises 256 residues: Small ribosomal subunit protein eS1B (256 aa).

At Ala2 the chain carries N-acetylalanine; partial.

The protein belongs to the eukaryotic ribosomal protein eS1 family. Component of the small ribosomal subunit. Mature ribosomes consist of a small (40S) and a large (60S) subunit. The 40S subunit contains about 33 different proteins and 1 molecule of RNA (18S). The 60S subunit contains about 49 different proteins and 3 molecules of RNA (25S, 5.8S and 5S).

The protein resides in the cytoplasm. In Clavispora lusitaniae (strain ATCC 42720) (Yeast), this protein is Small ribosomal subunit protein eS1B.